The primary structure comprises 97 residues: MNLRPLHDRVIVKRLDQETKTASGIVIPDAAAEKPDQGEVLAIGPGKRDDKGALIALDVKVGDRVLFGKYAGQTVKVDGQELLVMREEDIMAVVNAK.

This sequence belongs to the GroES chaperonin family. Heptamer of 7 subunits arranged in a ring. Interacts with the chaperonin GroEL.

It is found in the cytoplasm. Its function is as follows. Together with the chaperonin GroEL, plays an essential role in assisting protein folding. The GroEL-GroES system forms a nano-cage that allows encapsulation of the non-native substrate proteins and provides a physical environment optimized to promote and accelerate protein folding. GroES binds to the apical surface of the GroEL ring, thereby capping the opening of the GroEL channel. This chain is Co-chaperonin GroES, found in Burkholderia vietnamiensis.